The chain runs to 266 residues: Type II iodothyronine deiodinase (266 aa).

The Lumenal portion of the chain corresponds to 1–13 (MGSASEDLLVTLQ). The helical; Signal-anchor for type III membrane protein transmembrane segment at 14-34 (ILPGFFSNCLFLALYDSVVLV) threads the bilayer. Residues 35 to 266 (KRVVALLSRS…QWLELSYGRR (232 aa)) lie on the Cytoplasmic side of the membrane. The active site involves selenocysteine 134. Residue selenocysteine 134 is a non-standard amino acid, selenocysteine.

The protein belongs to the iodothyronine deiodinase family. In terms of assembly, predominantly monomer. Can form homodimers but homodimerization is not essential for enzyme activity.

Its subcellular location is the endoplasmic reticulum membrane. It carries out the reaction 3,3',5-triiodo-L-thyronine + iodide + A + H(+) = L-thyroxine + AH2. The catalysed reaction is 3,3'-diiodo-L-thyronine + iodide + A + H(+) = 3,3',5'-triiodo-L-thyronine + AH2. The enzyme catalyses 3'-iodo-L-thyronine + iodide + A + H(+) = 3',5'-diiodo-L-thyronine + AH2. Not inhibited by N(6)-propylthiouracil. Plays a crucial role in the metabolism of thyroid hormones (TH) and has specific roles in TH activation and inactivation by deiodination. Catalyzes the conversion of T4 (L-thyroxine/3,5,3',5'-tetraiodothyronine) to T3 (3,5,3'-triiodothyronine) and rT3 (3,3',5'-triiodothyronine) to T2 (3,3'-diiodothyronine) via outer-ring deiodination (ORD). Catalyzes the conversion 3',5'-T2 (3,5-diiodothyronine) to 3-T1 (3-monoiodothyronine) via ORD. This Fundulus heteroclitus (Killifish) protein is Type II iodothyronine deiodinase (dio2).